Reading from the N-terminus, the 379-residue chain is Homoserine O-succinyltransferase (379 aa).

Residues 51–360 form the AB hydrolase-1 domain; sequence NAVLICHALS…DAPQGHDAFL (310 aa). Catalysis depends on Ser157, which acts as the Nucleophile. Residue Arg227 participates in substrate binding. Residues Asp323 and His356 contribute to the active site. Asp357 contacts substrate.

The protein belongs to the AB hydrolase superfamily. MetX family. Homodimer.

It localises to the cytoplasm. The enzyme catalyses L-homoserine + succinyl-CoA = O-succinyl-L-homoserine + CoA. It functions in the pathway amino-acid biosynthesis; L-methionine biosynthesis via de novo pathway; O-succinyl-L-homoserine from L-homoserine: step 1/1. Transfers a succinyl group from succinyl-CoA to L-homoserine, forming succinyl-L-homoserine. This chain is Homoserine O-succinyltransferase, found in Pseudomonas fluorescens (strain Pf0-1).